The primary structure comprises 153 residues: Putative nuclear shuttle protein (153 aa).

The protein belongs to the nanoviridae nuclear shuttle protein family.

The protein localises to the host nucleus. It is found in the host cytoplasm. Its function is as follows. Putative nuclear shuttle protein. The sequence is that of Putative nuclear shuttle protein (DNA-N) from Trifolium subterraneum (Subterranean clover).